A 197-amino-acid chain; its full sequence is ATP-dependent Clp protease proteolytic subunit (197 aa).

Residue Ser98 is the Nucleophile of the active site. The active site involves His123.

This sequence belongs to the peptidase S14 family. Fourteen ClpP subunits assemble into 2 heptameric rings which stack back to back to give a disk-like structure with a central cavity, resembling the structure of eukaryotic proteasomes.

Its subcellular location is the cytoplasm. It catalyses the reaction Hydrolysis of proteins to small peptides in the presence of ATP and magnesium. alpha-casein is the usual test substrate. In the absence of ATP, only oligopeptides shorter than five residues are hydrolyzed (such as succinyl-Leu-Tyr-|-NHMec, and Leu-Tyr-Leu-|-Tyr-Trp, in which cleavage of the -Tyr-|-Leu- and -Tyr-|-Trp bonds also occurs).. In terms of biological role, cleaves peptides in various proteins in a process that requires ATP hydrolysis. Has a chymotrypsin-like activity. Plays a major role in the degradation of misfolded proteins. In Haemophilus ducreyi (strain 35000HP / ATCC 700724), this protein is ATP-dependent Clp protease proteolytic subunit.